We begin with the raw amino-acid sequence, 840 residues long: Sorting nexin-25 (840 aa).

The PXA domain maps to 1–164; it reads MDKALKEVFD…MLLAQLAYRE (164 aa). Residues 287-401 form the RGS domain; that stretch reads QFEDILANTF…IVSDLYEKLL (115 aa). A coiled-coil region spans residues 434-499; that stretch reads TNQINEQASF…RTDLQLHMAR (66 aa). The 121-residue stretch at 508-628 folds into the PX domain; that stretch reads GMWKASITSG…AFLSPSPDYL (121 aa). At Ser-665 the chain carries Phosphoserine.

This sequence belongs to the sorting nexin family.

The protein localises to the endosome membrane. Functionally, may be involved in several stages of intracellular trafficking. This Homo sapiens (Human) protein is Sorting nexin-25 (SNX25).